The chain runs to 659 residues: Tetratricopeptide repeat protein 30 homolog (659 aa).

7 TPR repeats span residues 3–36 (SQNMLIRDGEYTKSIYTMIKEERFQEAINVLNGI), 43–76 (RAGLSLLGHCYYQTQDFIEASNCYEYLVNLVPDV), 143–176 (ATVKNDEGCLLFQANMFEDALQRYVSALQAGGFN), 178–210 (HIAYNAALCHYRKKENSQALNYIAEIVERGIRN), 391–424 (CRSAPDQNALRVALREYEFALESYLPVAMARAWI), 450–483 (TWRLHAAHVLFMRGDRYKEAAAFYEPIVRQNYDD), and 533–566 (CIVNLVIGTLYCAKGNYEFGLSRIAHALDGGSGA).

It belongs to the TTC30/dfy-1/fleer family.

The protein localises to the cell projection. It is found in the cilium. Its function is as follows. Required for polyglutamylation of axonemal tubulin in sensory cilia. Plays a role in anterograde intraflagellar transport (IFT), the process by which cilia precursors are transported from the base of the cilium to the site of their incorporation at the tip. The polypeptide is Tetratricopeptide repeat protein 30 homolog (Aedes aegypti (Yellowfever mosquito)).